Consider the following 395-residue polypeptide: MTRSPRSTAWLRVVSLSLAAFIFNTAEFAPVALLSDIAASFSMSAAQVGLIITIYAWVVGLMSLPCMLLSSDMERRSLLIKIFILFAISNVLSGLAWNYWVLIMARIGVALSHAVFWSITASLVVRLAPADKKAQALSLLATGTALALVLGLPLGRVVGQYLGWRVTFVLIGLIAAVIMVGLMKLLPVLPSSNSGSLKSLPLLLKRPALLCVYGLTVMIVTAHFTAYSYIEPFILKVALLSENFTTILLLIFGGAGIIGSMLFSRYSSKYPAGFLIVSFAFLAVCLLLLLPLSFSGWSLSTLCIVWGIAIMALSLGMQVKVLTLASDATDVAMALYSGIYNIGIGGGALLGNQVITHLGLPDIGYMGAAMAILATVCCIFTFVRYSHVLKTSLTN.

Transmembrane regions (helical) follow at residues 13-33, 48-68, 82-102, 107-127, 134-154, 168-188, 207-227, 244-264, 272-292, 297-317, 331-351, and 363-383; these read VVSL…PVAL, VGLI…PCML, IFIL…YWVL, IGVA…VVRL, AQAL…GLPL, FVLI…LLPV, PALL…FTAY, FTTI…MLFS, AGFL…LLPL, WSLS…SLGM, VAMA…ALLG, and IGYM…FTFV.

This sequence belongs to the major facilitator superfamily. SotB (TC 2.A.1.2) family.

The protein resides in the cell inner membrane. In terms of biological role, involved in the efflux of sugars. The physiological role may be the reduction of the intracellular concentration of toxic sugars or sugar metabolites. The chain is Probable sugar efflux transporter from Pectobacterium atrosepticum (strain SCRI 1043 / ATCC BAA-672) (Erwinia carotovora subsp. atroseptica).